The sequence spans 443 residues: Omega-6 fatty acid desaturase, chloroplastic (443 aa).

A chloroplast-targeting transit peptide spans 1–64 (MASRIADSLF…AKKRIGCIKA (64 aa)). Residues 166 to 170 (HDCAH) carry the Histidine box-1 motif. Positions 202–206 (HDRHH) match the Histidine box-2 motif. Positions 362–366 (HIPHH) match the Histidine box-3 motif.

This sequence belongs to the fatty acid desaturase type 1 family.

It is found in the plastid. It localises to the chloroplast membrane. It carries out the reaction a (9Z)-octadecenoyl-containing glycerolipid + 2 reduced [2Fe-2S]-[ferredoxin] + O2 + 2 H(+) = a (9Z,12Z)-octadecadienoyl-containing glycerolipid + 2 oxidized [2Fe-2S]-[ferredoxin] + 2 H2O. The protein operates within lipid metabolism; polyunsaturated fatty acid biosynthesis. In terms of biological role, chloroplast omega-6 fatty acid desaturase introduces the second double bond in the biosynthesis of 16:3 and 18:3 fatty acids, important constituents of plant membranes. It is thought to use ferredoxin as an electron donor and to act on fatty acids esterified to galactolipids, sulfolipids and phosphatidylglycerol. The protein is Omega-6 fatty acid desaturase, chloroplastic of Brassica napus (Rape).